A 1128-amino-acid polypeptide reads, in one-letter code: Major DNA-binding protein (1128 aa).

The segment at 1104-1128 (LGGGGQGSGGRRKRRLATVLPGLEV) is required for nuclear localization.

Belongs to the herpesviridae major DNA-binding protein family. Homooligomers. Forms double-helical filaments necessary for the formation of replication compartments within the host nucleus. Interacts with the origin-binding protein. Interacts with the helicase primase complex; this interaction stimulates primer synthesis activity of the helicase-primase complex. Interacts with the DNA polymerase. Interacts with the alkaline exonuclease; this interaction increases its nuclease processivity.

It localises to the virion tegument. The protein localises to the host nucleus. Plays several crucial roles in viral infection. Participates in the opening of the viral DNA origin to initiate replication by interacting with the origin-binding protein. May disrupt loops, hairpins and other secondary structures present on ssDNA to reduce and eliminate pausing of viral DNA polymerase at specific sites during elongation. Promotes viral DNA recombination by performing strand-transfer, characterized by the ability to transfer a DNA strand from a linear duplex to a complementary single-stranded DNA circle. Can also catalyze the renaturation of complementary single strands. Additionally, reorganizes the host cell nucleus, leading to the formation of prereplicative sites and replication compartments. This process is driven by the protein which can form double-helical filaments in the absence of DNA. This chain is Major DNA-binding protein, found in Homo sapiens (Human).